Consider the following 333-residue polypeptide: Alpha-N-acetylgalactosaminide alpha-2,6-sialyltransferase 6 (333 aa).

The span at 1 to 12 (MACSRPPSQCEP) shows a compositional bias: polar residues. The interval 1–26 (MACSRPPSQCEPTSLPPGPPAGRRHL) is disordered. Residues 1-43 (MACSRPPSQCEPTSLPPGPPAGRRHLPLSRRRREMSSNKEQRS) lie on the Cytoplasmic side of the membrane. A helical; Signal-anchor for type II membrane protein transmembrane segment spans residues 44-64 (AVFVILFALITILILYSSNSA). Topologically, residues 65 to 333 (NEVFHYGSLR…GITFSHPSWT (269 aa)) are lumenal. Asparagine 98 is a glycosylation site (N-linked (GlcNAc...) asparagine). Cysteine 108 and cysteine 256 form a disulfide bridge.

This sequence belongs to the glycosyltransferase 29 family. In terms of tissue distribution, expressed in kidney, in proximal tubule epithelial cells. Expressed in colon cell lines.

It is found in the golgi apparatus membrane. It carries out the reaction a ganglioside GM1b (d18:1(4E)) + CMP-N-acetyl-beta-neuraminate = a ganglioside GD1alpha (d18:1(4E)) + CMP + H(+). The enzyme catalyses N-acetyl-alpha-neuraminosyl-(2-&gt;3)-beta-D-galactosyl-(1-&gt;3)-N-acetyl-beta-D-glucosaminyl-(1-&gt;3)-beta-D-galactosyl-(1-&gt;4)-beta-D-glucosyl-(1&lt;-&gt;1')-N-acyl-sphing-4-enine + CMP-N-acetyl-beta-neuraminate = N-acetyl-alpha-neuraminosyl-(2-&gt;3)-beta-D-galactosyl-(1-&gt;3)-[N-acetyl-alpha-neuraminosyl-(2-&gt;6)]-N-acetyl-beta-D-glucosaminyl-(1-&gt;3)-beta-D-galactosyl-(1-&gt;4)-beta-D-glucosyl-(1&lt;-&gt;1')-N-acyl-sphing-4-enine + CMP + H(+). It catalyses the reaction a globoside MSGG + CMP-N-acetyl-beta-neuraminate = a globoside DSGG + CMP + H(+). The catalysed reaction is a ganglioside GD1a (d18:1(4E)) + CMP-N-acetyl-beta-neuraminate = a ganglioside GT1aalpha (d18:1(4E)) + CMP + H(+). It carries out the reaction a ganglioside GT1b (d18:1(4E)) + CMP-N-acetyl-beta-neuraminate = a ganglioside GQ1balpha (d18:1(4E)) + CMP + H(+). The enzyme catalyses 3-O-[alpha-Neu5Ac-(2-&gt;3)-beta-D-Gal-(1-&gt;3)-alpha-D-GalNAc]-L-Ser-[protein] + CMP-N-acetyl-beta-neuraminate = a 3-O-{alpha-Neu5Ac-(2-&gt;3)-beta-D-Gal-(1-&gt;3)-[alpha-Neu5Ac-(2-&gt;6)]-alpha-D-GalNAc}-L-seryl-[protein] + CMP + H(+). It catalyses the reaction 3-O-[alpha-Neu5Ac-(2-&gt;3)-beta-D-Gal-(1-&gt;3)-alpha-D-GalNAc]-L-Thr-[protein] + CMP-N-acetyl-beta-neuraminate = a 3-O-{alpha-Neu5Ac-(2-&gt;3)-beta-D-Gal-(1-&gt;3)-[alpha-Neu5Ac-(2-&gt;6)]-alpha-D-GalNAc}-L-threonyl-[protein] + CMP + H(+). Transfers the sialyl group (N-acetyl-alpha-neuraminyl or NeuAc) from CMP-NeuAc onto glycoproteins and glycolipids, forming an alpha-2,6-linkage. Produces branched type disialyl structures by transfer of a sialyl group onto the GalNAc or GlcNAc residue inside backbone core chains having a terminal sialic acid with an alpha-2,3-linkage on Gal. ST6GalNAcVI prefers glycolipids to glycoproteins, predominantly catalyzing the biosynthesis of ganglioside GD1alpha from GM1b. Besides GMb1, MSGG and other glycolipids, it shows activity towards sialyl Lc4Cer generating disialyl Lc4Cer, which can lead to the synthesis of disialyl Lewis a (Le(a)), suggested to be a cancer-associated antigen. Also has activity toward GD1a and GT1b, and can generate DSGG (disialylgalactosylgloboside) from MSGG (monosialylgalactosylgloboside). The sequence is that of Alpha-N-acetylgalactosaminide alpha-2,6-sialyltransferase 6 (ST6GALNAC6) from Homo sapiens (Human).